The sequence spans 617 residues: MAELETGAVPIREEFLVKQDGNKKRKRKERGQNKRREKIHVKENNALCPAISIGNECPYKENCKFPHDVEAYLATKAPDIGDKCPIFERYGVCPAGFKCRWLAGHVVINADGKYELIKKPDGQFTLFTVNTVGKEVQRKLRTKQLDLSKAESIISAVLGEEKPDPSSKVSNIPEENRDATSAISEGKETESVSLEETGVLKNQTVSVNVDLKEISSQARSNIALPTLRPQEKNLIDWRDRKILAPLTTVGNPPFRRLCGSLGADTFYSEMAMCYPLMQGHQPEWALVRGLNYEREMMRGGRRGILGVQLATGKLWQATKTAQVIAEQCDGVDFLDLNCGCPIDLVFRQGAGSSLLENPGRLLRNLQGMDAVSGQIPVTVKLRMGNKDDHPVVKNLIGRIFNETNTSAATLHGRSRQQRYSKNANWDYIGEIASKVKSMNERIDELPEDSLRTQPLSLIGNGDCYSWQDWYDGVNKGVDTVMIARGALVKPWIFEEIEARQFIDKSSTQRLEMLEQYCNNGLEYWGSDSQGVNTTRRFFLEFMSFFHRYTPIALYEVQRPRLNDRPPLYTARDEMETLLASNKVTDWVKLSEFFLGPTPERFTFTPKHKSNSVEEAEG.

The C3H1-type zinc finger occupies Lys42–Glu70. The tract at residues Glu160 to Ser193 is disordered. FMN is bound by residues Pro245 to Thr247 and Gln308. The Proton donor role is filled by Cys340. FMN-binding positions include Lys380, His411, Asn460 to Asp462, and Ala483 to Arg484.

It belongs to the Dus family. Dus3 subfamily. It depends on FMN as a cofactor.

The protein localises to the cytoplasm. It is found in the nucleus. It carries out the reaction 5,6-dihydrouridine(47) in tRNA + NAD(+) = uridine(47) in tRNA + NADH + H(+). It catalyses the reaction 5,6-dihydrouridine(47) in tRNA + NADP(+) = uridine(47) in tRNA + NADPH + H(+). The enzyme catalyses a 5,6-dihydrouridine in mRNA + NAD(+) = a uridine in mRNA + NADH + H(+). The catalysed reaction is a 5,6-dihydrouridine in mRNA + NADP(+) = a uridine in mRNA + NADPH + H(+). Its function is as follows. Catalyzes the synthesis of dihydrouridine, a modified base, in various RNAs, such as tRNAs and mRNAs. Modifies the uridine in position 47 (U47) in the D-loop of tRNAs. Also able to mediate formation of dihydrouridine outside of the D-loop of tRNAs. Catalyzes the synthesis of dihydrouridine in some mRNAs, thereby affecting their translation. Dus3-mediated dihydrouridylation of the mRNA encoding alpha-tubulin nda2 is required for meiotic chromosome segregation. The polypeptide is tRNA-dihydrouridine(47) synthase [NAD(P)(+)] (Schizosaccharomyces pombe (strain 972 / ATCC 24843) (Fission yeast)).